Consider the following 649-residue polypeptide: Epithelial sodium channel subunit gamma (649 aa).

Residues 1–55 (MAPGEKIKAKIKKNLPVTGPQAPTIKELMRWYCLNTNTHGCRRIVVSRGRLRRLL) lie on the Cytoplasmic side of the membrane. The chain crosses the membrane as a helical span at residues 56-76 (WIGFTLTAVALILWQCALLVF). The Extracellular portion of the chain corresponds to 77–541 (SFYTVSVSIK…GGQLGLWMSC (465 aa)). 8 disulfide bridges follow: cysteine 100-cysteine 283, cysteine 207-cysteine 214, cysteine 260-cysteine 267, cysteine 372-cysteine 457, cysteine 394-cysteine 453, cysteine 398-cysteine 449, cysteine 407-cysteine 434, and cysteine 409-cysteine 423. The gating release of inhibition by proteolysis (GRIP); protease-sensitive region that is responsible for the proteolytic activation of the channel stretch occupies residues 135–221 (RKRREAESWN…SDCATYTFSS (87 aa)). An N-linked (GlcNAc...) asparagine glycan is attached at asparagine 209. An N-linked (GlcNAc...) asparagine glycan is attached at asparagine 497. Residues 542 to 562 (SVVCVIEIIEVFFIDFFSIIA) traverse the membrane as a helical segment. Residues 563–649 (RRQWQKAKEW…LTDTQMLDEL (87 aa)) lie on the Cytoplasmic side of the membrane. The PY motif; recruits WW domain-containing proteins and is thereby required for ubiquitination and inhibition of the channel by NEDD4 and NEDD4L motif lies at 623–627 (PPPKY).

Belongs to the amiloride-sensitive sodium channel (TC 1.A.6) family. SCNN1G subfamily. Component of the heterotrimeric epithelial sodium channel (ENaC) composed of an alpha/SCNN1A, a beta/SCNN1B and a gamma/SCNN1G subunit. An additional delta/SCNN1D subunit can replace the alpha/SCNN1A subunit to form an alternative channel with specific properties. Interacts with WWP1 (via WW domains). Interacts with WWP2 (via WW domains); inhibits the channel. Interacts with the full-length immature form of PCSK9 (pro-PCSK9); inhibits ENaC by promoting its proteasomal degradation. Interacts with BPIFA1; the interaction is indirect via SCNN1B and inhibits the proteolytic maturation of SCNN1A and SCNN1G and the activation of ENaC. Post-translationally, phosphorylated on serine and threonine residues. Aldosterone and insulin increase the basal level of phosphorylation. In terms of processing, ubiquitinated. Can be ubiquitinated at multiple sites and undergo monoubiquitination and polyubiquitination. Ubiquitination by NEDD4 or NEDD4L inhibits the ENaC channel through endocytosis, intracellular retention and degradation of its individual subunits. ENaC is activated through the proteolytic maturation of its subunits. Furin cleaves the SCNN1G subunit first, followed by cleavage by prostasin (PRSS8), which results in a stepwise increase in the open probability of the channel due to the release of an inhibitory tract. BPIFA1, which is recruited by the SCNN1B subunit, prevents the proteolytic activation of ENaC. Post-translationally, N-glycosylated. N-linked glycans are processed to complex type during ENaC complex assembly and transport to the plasma membrane. In terms of tissue distribution, expressed in kidney (at protein level).

The protein localises to the apical cell membrane. It carries out the reaction Na(+)(in) = Na(+)(out). Originally identified and characterized by its inhibition by the diuretic drug amiloride. This is one of the three pore-forming subunits of the heterotrimeric epithelial sodium channel (ENaC), a critical regulator of sodium balance and fluid homeostasis. ENaC operates in epithelial tissues, where it mediates the electrodiffusion of sodium ions from extracellular fluid through the apical membrane of cells, with water following osmotically. It plays a key role in maintaining sodium homeostasis through electrogenic sodium reabsorption in the kidneys. Additionally, ENaC is essential for airway surface liquid homeostasis, which is crucial for proper mucus clearance. The polypeptide is Epithelial sodium channel subunit gamma (Homo sapiens (Human)).